A 104-amino-acid chain; its full sequence is Complex III assembly factor LYRM7 (104 aa).

Belongs to the complex I LYR family. As to quaternary structure, interacts with UQCRFS1.

The protein resides in the mitochondrion matrix. Assembly factor required for Rieske Fe-S protein UQCRFS1 incorporation into the cytochrome b-c1 (CIII) complex. Functions as a chaperone, binding to this subunit within the mitochondrial matrix and stabilizing it prior to its translocation and insertion into the late CIII dimeric intermediate within the mitochondrial inner membrane. This chain is Complex III assembly factor LYRM7 (LYRM7), found in Danio rerio (Zebrafish).